We begin with the raw amino-acid sequence, 135 residues long: Large ribosomal subunit protein eL32 (135 aa).

Residue Lys-9 forms a Glycyl lysine isopeptide (Lys-Gly) (interchain with G-Cter in SUMO2) linkage. At Lys-50 the chain carries N6-succinyllysine. Ser-62 is subject to Phosphoserine.

Belongs to the eukaryotic ribosomal protein eL32 family. As to quaternary structure, component of the large ribosomal subunit.

It is found in the cytoplasm. Component of the large ribosomal subunit. The ribosome is a large ribonucleoprotein complex responsible for the synthesis of proteins in the cell. This Oryctolagus cuniculus (Rabbit) protein is Large ribosomal subunit protein eL32 (RPL32).